Here is a 373-residue protein sequence, read N- to C-terminus: 2-oxoglutarate oxidoreductase subunit KorB (373 aa).

The segment at 26–50 is disordered; it reads TPSLTKNAGVPTTDQPQKGKDFTSD. The segment covering 27 to 41 has biased composition (polar residues); that stretch reads PSLTKNAGVPTTDQP.

In terms of assembly, KG oxidoreductase (KOR) is composed of KorA and KorB subunits. Mg(2+) is required as a cofactor.

The catalysed reaction is 2 oxidized [2Fe-2S]-[ferredoxin] + 2-oxoglutarate + CoA = succinyl-CoA + 2 reduced [2Fe-2S]-[ferredoxin] + CO2 + H(+). The protein operates within carbohydrate metabolism; tricarboxylic acid cycle. Its function is as follows. Component of KG oxidoreductase (KOR) that catalyzes the CoA-dependent oxidative decarboxylation of 2-oxoglutarate (alpha-ketoglutarate, KG) to succinyl-CoA. Methyl viologen can act as electron acceptor in vitro; the physiologic electron acceptor is unknown. Is involved in the alternative TCA pathway that functions concurrently with fatty acid beta-oxidation. Since a growing body of evidence indicates that lipids (for example cholesterol and fatty acids) are a predominant growth substrate for M.tuberculosis during infection, flux through KOR likely represents an important step in intermediary metabolism in vivo. KOR-dependent decarboxylation of KG also appears to be an important source of CO(2) in M.tuberculosis metabolism. In Mycobacterium tuberculosis (strain ATCC 25618 / H37Rv), this protein is 2-oxoglutarate oxidoreductase subunit KorB (korB).